The sequence spans 316 residues: Acetaldehyde dehydrogenase 1 (316 aa).

12-15 (SGNI) serves as a coordination point for NAD(+). The Acyl-thioester intermediate role is filled by Cys-132. NAD(+) contacts are provided by residues 163 to 171 (SAGPGTRAN) and Asn-291.

The protein belongs to the acetaldehyde dehydrogenase family.

It catalyses the reaction acetaldehyde + NAD(+) + CoA = acetyl-CoA + NADH + H(+). This chain is Acetaldehyde dehydrogenase 1, found in Pseudomonas putida (strain ATCC 700007 / DSM 6899 / JCM 31910 / BCRC 17059 / LMG 24140 / F1).